The sequence spans 339 residues: Flap endonuclease 1 (339 aa).

The N-domain stretch occupies residues 1 to 99 (MGVNLKEIVD…VAWEKRKKHK (99 aa)). Residues Asp29, Asp81, Glu153, Glu155, Asp174, Asp176, and Asp237 each coordinate Mg(2+). Residues 117–258 (EAIKYAKSLG…TAIEIVKRFG (142 aa)) form an I-domain region. An interaction with PCNA region spans residues 329 to 337 (NQKTLFSFF).

It belongs to the XPG/RAD2 endonuclease family. FEN1 subfamily. In terms of assembly, interacts with PCNA. PCNA stimulates the nuclease activity without altering cleavage specificity. Mg(2+) serves as cofactor.

Functionally, structure-specific nuclease with 5'-flap endonuclease and 5'-3' exonuclease activities involved in DNA replication and repair. During DNA replication, cleaves the 5'-overhanging flap structure that is generated by displacement synthesis when DNA polymerase encounters the 5'-end of a downstream Okazaki fragment. Binds the unpaired 3'-DNA end and kinks the DNA to facilitate 5' cleavage specificity. Cleaves one nucleotide into the double-stranded DNA from the junction in flap DNA, leaving a nick for ligation. Also involved in the base excision repair (BER) pathway. Acts as a genome stabilization factor that prevents flaps from equilibrating into structures that lead to duplications and deletions. Also possesses 5'-3' exonuclease activity on nicked or gapped double-stranded DNA. The polypeptide is Flap endonuclease 1 (Nanoarchaeum equitans (strain Kin4-M)).